The chain runs to 326 residues: MEEIIAPISKEILKAELSEDKRLRFTNKSHNEIYVITYQDSPNVMKEIGRLREIAFRAAGGGTGKAMDIDEYDVMENPYKQLVVWNPEAEEILGGYRYLLGDEVQFDEHGKPVLATAHMFNFSEVFLKEYLPYTVELGRSFVTLEYQSTRAGSKGLFALDNLWDGLGALTVIKPNVKYFFGKMTMYPSYHRQGRDMILYFLNKHFGDKDKLITPMKPLEIETDKKMLENLFCYDSFKEDYKILNTEVRKLGYNIPPLVNAYMSLSPTMRMFGTAINYGFGDVEETGILIAVNEILEDKRVRHIESFVKQHPEAMKITSGAHPILTK.

It belongs to the acetyltransferase family.

It catalyses the reaction a (3R)-hydroxyacyl-[ACP] + glycine = a lyso-glycine lipid + holo-[ACP] + H(+). It carries out the reaction (3R)-hydroxyhexadecanoyl-[ACP] + glycine = N-[(3R)-3-hydroxyhexadecanoyl]-glycine + holo-[ACP] + H(+). The protein operates within lipid metabolism. Functionally, is involved in the production of glycine lipids (GL), which are phosphorus-free membrane lipids. Catalyzes the first step of GL biosynthesis, i.e. the N-acylation of glycine via addition of a 3-hydroxy fatty acyl group, to form a range of monoacylated glycine (also named lyso-glycine lipids or lyso-GL). As an example, catalyzes the production of commendamide, an N-acylated (3-OH C16:0) derivative of glycine with hemolytic activity and the ability to solubilize cholesterol micelles; this compound can also activate NF-kB through the G-protein coupled receptor GPCR G2A/132. This is Glycine N(alpha)-acyltransferase from Phocaeicola vulgatus (strain ATCC 8482 / DSM 1447 / JCM 5826 / CCUG 4940 / NBRC 14291 / NCTC 11154) (Bacteroides vulgatus).